A 333-amino-acid chain; its full sequence is tRNA N6-adenosine threonylcarbamoyltransferase (333 aa).

Fe cation contacts are provided by H111 and H115. Substrate is bound by residues 134–138 (LVSGG), D167, G180, and N272. D300 contributes to the Fe cation binding site.

This sequence belongs to the KAE1 / TsaD family. Fe(2+) serves as cofactor.

It is found in the cytoplasm. It carries out the reaction L-threonylcarbamoyladenylate + adenosine(37) in tRNA = N(6)-L-threonylcarbamoyladenosine(37) in tRNA + AMP + H(+). Required for the formation of a threonylcarbamoyl group on adenosine at position 37 (t(6)A37) in tRNAs that read codons beginning with adenine. Is involved in the transfer of the threonylcarbamoyl moiety of threonylcarbamoyl-AMP (TC-AMP) to the N6 group of A37, together with TsaE and TsaB. TsaD likely plays a direct catalytic role in this reaction. This chain is tRNA N6-adenosine threonylcarbamoyltransferase, found in Legionella pneumophila (strain Paris).